Reading from the N-terminus, the 1488-residue chain is WD repeat-containing protein 7 (1488 aa).

7 WD repeats span residues 17–56 (APTHCISSILLTDDGGTIVTGCHDGQICLWDLSEELEVNP), 62–104 (GHTA…CIEF), 156–199 (ISPD…SGLQ), 324–366 (VICP…DKQE), 404–443 (NEPLKVTASVYIPAHGRLVCGREDGSIIIVPATQTAIVQL), 462–507 (GHRN…MKHI), and 558–597 (RHLFPIQVIKWRPSDDYLVVGCTDGSVCVWQMDTGALDRC). 2 disordered regions span residues 761-781 (EEEDEEEVMRQRREESDPEYR) and 911-947 (GDHMKKGPTRPPRPGTPDLSKARDSPPASSNIVQGQI). The segment covering 768 to 781 (VMRQRREESDPEYR) has biased composition (basic and acidic residues). The residue at position 935 (serine 935) is a Phosphoserine. A compositionally biased stretch (polar residues) spans 937–947 (PASSNIVQGQI). WD repeat units lie at residues 1349-1388 (PAICRFYMVSYYERSHRIAVGARHGSVALYDIRTGKCQTI) and 1390-1430 (GHKG…LGSI). Phosphoserine is present on serine 1454.

The polypeptide is WD repeat-containing protein 7 (Wdr7) (Rattus norvegicus (Rat)).